The sequence spans 428 residues: GTPase Obg (428 aa).

Residues 1–158 (MFVDQVKIYV…RDVILELKVL (158 aa)) enclose the Obg domain. The 171-residue stretch at 159–329 (ADVGLVGFPS…LLFEVANLIE (171 aa)) folds into the OBG-type G domain. Residues 165 to 172 (GFPSVGKS), 190 to 194 (FTTIV), 212 to 215 (DLPG), 282 to 285 (NKMD), and 310 to 312 (SAV) each bind GTP. 2 residues coordinate Mg(2+): S172 and T192. One can recognise an OCT domain in the interval 350-428 (KFDTEGVKFE…ILEYEFEFID (79 aa)).

The protein belongs to the TRAFAC class OBG-HflX-like GTPase superfamily. OBG GTPase family. Monomer. The cofactor is Mg(2+).

It localises to the cytoplasm. Its function is as follows. An essential GTPase which binds GTP, GDP and possibly (p)ppGpp with moderate affinity, with high nucleotide exchange rates and a fairly low GTP hydrolysis rate. Plays a role in control of the cell cycle, stress response, ribosome biogenesis and in those bacteria that undergo differentiation, in morphogenesis control. The polypeptide is GTPase Obg (Bacillus cereus (strain ATCC 14579 / DSM 31 / CCUG 7414 / JCM 2152 / NBRC 15305 / NCIMB 9373 / NCTC 2599 / NRRL B-3711)).